We begin with the raw amino-acid sequence, 547 residues long: uncharacterized protein (547 aa).

Residues 1–37 (MSAASSAIPKRSDPRLLDQKKSAKSTLPKNTPENGVS) are disordered. A compositionally biased stretch (basic and acidic residues) spans 10-21 (KRSDPRLLDQKK). Residues 24 to 37 (KSTLPKNTPENGVS) show a composition bias toward polar residues. 2 consecutive C3H1-type zinc fingers follow at residues 41–67 (NLQH…SHSL) and 68–95 (ETER…HALP). A disordered region spans residues 132–176 (SPSLSSKTMKNPADKANNTTATDVRGNTATSPYFPFSRSPGRHSG). The span at 147–162 (ANNTTATDVRGNTATS) shows a compositional bias: polar residues. Ser-343 is modified (phosphoserine). A Phosphotyrosine modification is found at Tyr-344. 6 positions are modified to phosphoserine: Ser-353, Ser-355, Ser-483, Ser-489, Ser-495, and Ser-499. At Thr-502 the chain carries Phosphothreonine. The segment covering 526 to 536 (VANSSPPWNST) has biased composition (polar residues). Residues 526-547 (VANSSPPWNSTVEEETPFQMDD) are disordered. Residues 537 to 547 (VEEETPFQMDD) show a composition bias toward acidic residues.

This is an uncharacterized protein from Schizosaccharomyces pombe (strain 972 / ATCC 24843) (Fission yeast).